A 391-amino-acid chain; its full sequence is DNA polymerase IV (391 aa).

A UmuC domain is found at 6–187; it reads IIHVDMDAFF…LPVEMLWGVG (182 aa). Mg(2+)-binding residues include Asp-10 and Asp-105. The active site involves Glu-106.

Belongs to the DNA polymerase type-Y family. Monomer. Mg(2+) is required as a cofactor.

Its subcellular location is the cytoplasm. It carries out the reaction DNA(n) + a 2'-deoxyribonucleoside 5'-triphosphate = DNA(n+1) + diphosphate. In terms of biological role, poorly processive, error-prone DNA polymerase involved in untargeted mutagenesis. Copies undamaged DNA at stalled replication forks, which arise in vivo from mismatched or misaligned primer ends. These misaligned primers can be extended by PolIV. Exhibits no 3'-5' exonuclease (proofreading) activity. May be involved in translesional synthesis, in conjunction with the beta clamp from PolIII. The chain is DNA polymerase IV from Carboxydothermus hydrogenoformans (strain ATCC BAA-161 / DSM 6008 / Z-2901).